Consider the following 984-residue polypeptide: uncharacterized protein (984 aa).

The segment at 941–984 (FGPSGPGPNQGPGDDYNNFKSTKYPRNGYNKYQPNNRIHSRNRY) is disordered.

Its subcellular location is the virion. This is an uncharacterized protein from Acanthamoeba polyphaga (Amoeba).